The sequence spans 311 residues: Dihydroorotate dehydrogenase B (NAD(+)), catalytic subunit (311 aa).

FMN contacts are provided by residues S24 and 48-49 (KA). Substrate contacts are provided by residues K48 and 72 to 76 (NAIGL). The FMN site is built by N104 and N132. N132 contributes to the substrate binding site. Catalysis depends on C135, which acts as the Nucleophile. Residues K170 and I196 each contribute to the FMN site. 197-198 (NT) serves as a coordination point for substrate. FMN contacts are provided by residues G222, 248–249 (GG), and 270–271 (GT).

This sequence belongs to the dihydroorotate dehydrogenase family. Type 1 subfamily. Heterotetramer of 2 PyrK and 2 PyrD type B subunits. FMN is required as a cofactor.

Its subcellular location is the cytoplasm. The catalysed reaction is (S)-dihydroorotate + NAD(+) = orotate + NADH + H(+). The protein operates within pyrimidine metabolism; UMP biosynthesis via de novo pathway; orotate from (S)-dihydroorotate (NAD(+) route): step 1/1. Functionally, catalyzes the conversion of dihydroorotate to orotate with NAD(+) as electron acceptor. In Lactococcus lactis subsp. lactis (strain IL1403) (Streptococcus lactis), this protein is Dihydroorotate dehydrogenase B (NAD(+)), catalytic subunit (pyrDB).